The following is a 429-amino-acid chain: GTPase Obg (429 aa).

In terms of domain architecture, Obg spans 1–158 (MLIDKCTLFL…IEAQFELKYI (158 aa)). The region spanning 159 to 330 (ADVGLLGLPN…LLKDIFKDYK (172 aa)) is the OBG-type G domain. Residues 165 to 172 (GLPNAGKS), 190 to 194 (FTTLS), 211 to 214 (DIPG), 281 to 284 (NKID), and 311 to 313 (SGF) contribute to the GTP site. Residues serine 172 and threonine 192 each contribute to the Mg(2+) site. The region spanning 351-429 (KVEKEQEDIV…RIQDVMFEIN (79 aa)) is the OCT domain.

This sequence belongs to the TRAFAC class OBG-HflX-like GTPase superfamily. OBG GTPase family. In terms of assembly, monomer. It depends on Mg(2+) as a cofactor.

The protein resides in the cytoplasm. Its function is as follows. An essential GTPase which binds GTP, GDP and possibly (p)ppGpp with moderate affinity, with high nucleotide exchange rates and a fairly low GTP hydrolysis rate. Plays a role in control of the cell cycle, stress response, ribosome biogenesis and in those bacteria that undergo differentiation, in morphogenesis control. This Malacoplasma penetrans (strain HF-2) (Mycoplasma penetrans) protein is GTPase Obg.